A 517-amino-acid chain; its full sequence is Serine carboxypeptidase ctsa-3.2 (517 aa).

The signal sequence occupies residues 1-21 (MWWTSLVFSVLLFDLIFISNC). S172 is a catalytic residue. N269 carries an N-linked (GlcNAc...) asparagine glycan. Catalysis depends on residues D418 and H485.

The protein belongs to the peptidase S10 family.

This Caenorhabditis elegans protein is Serine carboxypeptidase ctsa-3.2.